A 307-amino-acid polypeptide reads, in one-letter code: Serine/threonine-protein phosphatase 4 catalytic subunit (307 aa).

Residues aspartate 54, histidine 56, aspartate 82, and asparagine 114 each coordinate Mn(2+). Residue histidine 115 is the Proton donor of the active site. Residues histidine 164 and histidine 238 each coordinate Mn(2+). At leucine 307 the chain carries Leucine methyl ester.

It belongs to the PPP phosphatase family. PP-4 (PP-X) subfamily. In terms of assembly, serine/threonine-protein phosphatase 4 (PP4) occurs in different assemblies of the catalytic and one or more regulatory subunits. Probably part of a PP4 PPP4C-PPP4R2-PPP4R3 complex containing Pp4-19C, PPP4R2r and flfl. Interacts with Ptpa; thereby mediating basal localization of the Miranda (Mira) complex; probably by dephosphorylation of Mira. The cofactor is Mn(2+). In terms of processing, reversibly methyl esterified on Leu-307 by leucine carboxyl methyltransferase 1 (LCMT1) and protein phosphatase methylesterase 1 (PPME1). Carboxyl methylation influences the affinity of the catalytic subunit for the different regulatory subunits, thereby modulating the PP2A holoenzyme's substrate specificity, enzyme activity and cellular localization.

It is found in the cytoplasm. The protein localises to the nucleus. The protein resides in the cytoskeleton. Its subcellular location is the microtubule organizing center. It localises to the centrosome. The enzyme catalyses O-phospho-L-seryl-[protein] + H2O = L-seryl-[protein] + phosphate. It catalyses the reaction O-phospho-L-threonyl-[protein] + H2O = L-threonyl-[protein] + phosphate. Protein phosphatase that regulates many processes such as microtubule organization at centrosomes. The probable PP4 complex Pp4-19C-PPP4R2r-flfl (PPP4C-PPP4R2-PPP4R3) is required to prevent caspase-induced cell death (in vitro). This Drosophila melanogaster (Fruit fly) protein is Serine/threonine-protein phosphatase 4 catalytic subunit (Pp4-19C).